Here is a 428-residue protein sequence, read N- to C-terminus: Dihydroorotase (428 aa).

Positions 56 and 58 each coordinate Zn(2+). Residues 58-60 (HLR) and asparagine 90 each bind substrate. The Zn(2+) site is built by aspartate 150, histidine 177, and histidine 230. A substrate-binding site is contributed by asparagine 276. Position 303 (aspartate 303) interacts with Zn(2+). Aspartate 303 is a catalytic residue. Position 307 (histidine 307) interacts with substrate.

The protein belongs to the metallo-dependent hydrolases superfamily. DHOase family. Class I DHOase subfamily. It depends on Zn(2+) as a cofactor.

It catalyses the reaction (S)-dihydroorotate + H2O = N-carbamoyl-L-aspartate + H(+). It participates in pyrimidine metabolism; UMP biosynthesis via de novo pathway; (S)-dihydroorotate from bicarbonate: step 3/3. Its function is as follows. Catalyzes the reversible cyclization of carbamoyl aspartate to dihydroorotate. This Streptomyces coelicolor (strain ATCC BAA-471 / A3(2) / M145) protein is Dihydroorotase.